Consider the following 1488-residue polypeptide: DNA polymerase alpha catalytic subunit (1488 aa).

Disordered regions lie at residues 1–22, 79–124, and 236–325; these read MSES…GRFA, LRDF…TGKA, and FFSS…ESED. The span at 83–93 shows a compositional bias: acidic residues; the sequence is FEDEDEYSDGE. The short motif at 96-103 is the Nuclear localization signal element; sequence RKDSKKKK. Residues 99-113 show a composition bias toward basic residues; the sequence is SKKKKGVAPNSKKRP. Phosphoserine is present on S239. Residues 242 to 258 are compositionally biased toward basic and acidic residues; it reads IKKEPMPEKTPAKKATE. Residues 260 to 278 are compositionally biased toward acidic residues; sequence PFSDNEMDFSCLDDDENQF. Residues S262 and S269 each carry the phosphoserine modification. Residues 286 to 303 are compositionally biased toward polar residues; sequence TEKVSQTKTAAEKTSQSK. Over residues 304-325 the composition is skewed to basic and acidic residues; that stretch reads VAEKSAPKKETTGSPKESESED. The residue at position 314 (T314) is a Phosphothreonine. S317 carries the phosphoserine modification. Residues 638 to 758 form a contains conserved residues essential for 3' -&gt; 5' exonuclease activities region; that stretch reads DSERALLSWF…DLLEMYEKGE (121 aa). DNA-binding regions lie at residues 675–734 and 1255–1380; these read QIVA…CKQV and PTKF…RKKS. C1296, C1299, C1324, C1329, C1362, C1367, C1385, and C1388 together coordinate Zn(2+). A CysA-type zinc finger spans residues 1296 to 1327; the sequence is CVTCKTEQLMASAYRPGPSNSHIAVLQQCAKS. Positions 1362-1388 match the CysB motif motif; sequence CDHPDCNFNTRTHSLRKKSHRPLCQKC.

It belongs to the DNA polymerase type-B family. Component of the alpha DNA polymerase complex (also known as the alpha DNA polymerase-primase complex) consisting of four subunits: the catalytic subunit PolA1, the regulatory subunit PolA2, and the primase complex subunits Prim1 and Prim2 respectively. PolA1 associates with the DNA primase complex before association with PolA2. Interacts with Dpit47; the interaction inhibits the activity of the DNA polymerase and occurs only in proliferating cells but not in quiescent cells. In terms of processing, in embryos, a cleaved form of 130 kDa is produced up to cycle 14 and then disappears. Expressed in embryos (at protein level).

The protein resides in the nucleus. The enzyme catalyses DNA(n) + a 2'-deoxyribonucleoside 5'-triphosphate = DNA(n+1) + diphosphate. Inhibited by N2-(p-n-butylphenyl) deoxyguanosine 5'-triphosphate and N2-(p-n-butylphenyl) deoxyadenosine 5'-triphosphate. DNA synthesis is not inhibited by fungal toxin alpha-amaitin. The 3'-5' exonuclease activity is inhibited by 10mM dGMP. Catalytic subunit of the DNA polymerase alpha complex (also known as the alpha DNA polymerase-primase complex) which plays an essential role in the initiation of DNA synthesis. During the S phase of the cell cycle, the DNA polymerase alpha complex (composed of a catalytic subunit PolA1, an accessory subunit PolA2 and two primase subunits, the catalytic subunit Prim1 and the regulatory subunit Prim2) is recruited to DNA at the replicative forks. The primase subunit of the polymerase alpha complex initiates DNA synthesis by oligomerising short RNA primers on both leading and lagging strands. These primers are initially extended by the polymerase alpha catalytic subunit and subsequently transferred to polymerase delta and polymerase epsilon for processive synthesis on the lagging and leading strand, respectively. In addition to polymerase activity, exhibits 3' to 5' exonuclease activity. The polypeptide is DNA polymerase alpha catalytic subunit (Drosophila melanogaster (Fruit fly)).